Here is a 125-residue protein sequence, read N- to C-terminus: Large ribosomal subunit protein bL12 (125 aa).

This sequence belongs to the bacterial ribosomal protein bL12 family. In terms of assembly, homodimer. Part of the ribosomal stalk of the 50S ribosomal subunit. Forms a multimeric L10(L12)X complex, where L10 forms an elongated spine to which 2 to 4 L12 dimers bind in a sequential fashion. Binds GTP-bound translation factors.

Its function is as follows. Forms part of the ribosomal stalk which helps the ribosome interact with GTP-bound translation factors. Is thus essential for accurate translation. The sequence is that of Large ribosomal subunit protein bL12 from Bradyrhizobium sp. (strain BTAi1 / ATCC BAA-1182).